The primary structure comprises 136 residues: Protein K5 (136 aa).

Belongs to the poxviridae K5 protein family.

In Homo sapiens (Human), this protein is Protein K5.